The sequence spans 74 residues: Kappa-scoloptoxin(03)-Ssm1a (74 aa).

The signal sequence occupies residues 1–23; sequence MNSSIAILLVMALIMFSLDKSYS. 3 disulfide bridges follow: Cys-32/Cys-59, Cys-42/Cys-58, and Cys-45/Cys-68.

It belongs to the scoloptoxin-03 family. As to expression, expressed by the venom gland.

The protein localises to the secreted. This toxin inhibits voltage-gated potassium channel currents in DRG neurons (IC(50)=44.2 nM). In vivo, insects injected with this toxin showed signs of neurotoxicity including twitching, paralysis, and body contraction. In Scolopendra mutilans (Chinese red-headed centipede), this protein is Kappa-scoloptoxin(03)-Ssm1a.